The primary structure comprises 119 residues: Beta-2-microglobulin (119 aa).

The N-terminal stretch at Met-1–Ala-20 is a signal peptide. The 90-residue stretch at Pro-25–Lys-114 folds into the Ig-like C1-type domain. An intrachain disulfide couples Cys-45 to Cys-100.

This sequence belongs to the beta-2-microglobulin family. In terms of assembly, heterodimer of an alpha chain and a beta chain. Beta-2-microglobulin is the beta-chain of major histocompatibility complex class I molecules.

It is found in the secreted. Component of the class I major histocompatibility complex (MHC). Involved in the presentation of peptide antigens to the immune system. This Chiropotes satanas (Brown-bearded saki) protein is Beta-2-microglobulin (B2M).